Consider the following 433-residue polypeptide: D-amino acid dehydrogenase (433 aa).

Val3–Tyr17 serves as a coordination point for FAD.

The protein belongs to the DadA oxidoreductase family. The cofactor is FAD.

It catalyses the reaction a D-alpha-amino acid + A + H2O = a 2-oxocarboxylate + AH2 + NH4(+). Its pathway is amino-acid degradation; D-alanine degradation; NH(3) and pyruvate from D-alanine: step 1/1. Oxidative deamination of D-amino acids. The chain is D-amino acid dehydrogenase from Pseudomonas syringae pv. syringae (strain B728a).